A 66-amino-acid chain; its full sequence is Large ribosomal subunit protein bL33c (66 aa).

It belongs to the bacterial ribosomal protein bL33 family.

It localises to the plastid. Its subcellular location is the chloroplast. The protein is Large ribosomal subunit protein bL33c of Gossypium barbadense (Sea Island cotton).